We begin with the raw amino-acid sequence, 172 residues long: Crossover junction endodeoxyribonuclease RuvC (172 aa).

Catalysis depends on residues aspartate 12, glutamate 71, and aspartate 143. The Mg(2+) site is built by aspartate 12, glutamate 71, and aspartate 143.

The protein belongs to the RuvC family. As to quaternary structure, homodimer which binds Holliday junction (HJ) DNA. The HJ becomes 2-fold symmetrical on binding to RuvC with unstacked arms; it has a different conformation from HJ DNA in complex with RuvA. In the full resolvosome a probable DNA-RuvA(4)-RuvB(12)-RuvC(2) complex forms which resolves the HJ. Requires Mg(2+) as cofactor.

The protein resides in the cytoplasm. It carries out the reaction Endonucleolytic cleavage at a junction such as a reciprocal single-stranded crossover between two homologous DNA duplexes (Holliday junction).. Its function is as follows. The RuvA-RuvB-RuvC complex processes Holliday junction (HJ) DNA during genetic recombination and DNA repair. Endonuclease that resolves HJ intermediates. Cleaves cruciform DNA by making single-stranded nicks across the HJ at symmetrical positions within the homologous arms, yielding a 5'-phosphate and a 3'-hydroxyl group; requires a central core of homology in the junction. The consensus cleavage sequence is 5'-(A/T)TT(C/G)-3'. Cleavage occurs on the 3'-side of the TT dinucleotide at the point of strand exchange. HJ branch migration catalyzed by RuvA-RuvB allows RuvC to scan DNA until it finds its consensus sequence, where it cleaves and resolves the cruciform DNA. The protein is Crossover junction endodeoxyribonuclease RuvC of Coxiella burnetii (strain CbuG_Q212) (Coxiella burnetii (strain Q212)).